The chain runs to 218 residues: Ribose-5-phosphate isomerase A (218 aa).

Residues 28–31, 81–84, and 94–97 contribute to the substrate site; these read TGST, DGAD, and KGGG. The Proton acceptor role is filled by Glu103. Lys121 is a substrate binding site.

This sequence belongs to the ribose 5-phosphate isomerase family. Homodimer.

It catalyses the reaction aldehydo-D-ribose 5-phosphate = D-ribulose 5-phosphate. The protein operates within carbohydrate degradation; pentose phosphate pathway; D-ribose 5-phosphate from D-ribulose 5-phosphate (non-oxidative stage): step 1/1. Its function is as follows. Catalyzes the reversible conversion of ribose-5-phosphate to ribulose 5-phosphate. This is Ribose-5-phosphate isomerase A from Aliivibrio salmonicida (strain LFI1238) (Vibrio salmonicida (strain LFI1238)).